The sequence spans 375 residues: tRNA-specific 2-thiouridylase MnmA (375 aa).

Residues 12 to 19 (GMSGGVDS) and Met-38 contribute to the ATP site. The interaction with target base in tRNA stretch occupies residues 98-100 (NPD). Cys-103 (nucleophile) is an active-site residue. Cys-103 and Cys-200 are oxidised to a cystine. Gly-127 contacts ATP. An interaction with tRNA region spans residues 150-152 (KDQ). Catalysis depends on Cys-200, which acts as the Cysteine persulfide intermediate. Positions 312–313 (RY) are interaction with tRNA.

This sequence belongs to the MnmA/TRMU family.

The protein resides in the cytoplasm. It carries out the reaction S-sulfanyl-L-cysteinyl-[protein] + uridine(34) in tRNA + AH2 + ATP = 2-thiouridine(34) in tRNA + L-cysteinyl-[protein] + A + AMP + diphosphate + H(+). Its function is as follows. Catalyzes the 2-thiolation of uridine at the wobble position (U34) of tRNA, leading to the formation of s(2)U34. This chain is tRNA-specific 2-thiouridylase MnmA, found in Ligilactobacillus salivarius (strain UCC118) (Lactobacillus salivarius).